The sequence spans 255 residues: Hemin import ATP-binding protein HmuV (255 aa).

In terms of domain architecture, ABC transporter spans 2-238 (LDVEGLHLKR…AALNAVFGID (237 aa)). 34–41 (GPNGAGKS) is a binding site for ATP.

It belongs to the ABC transporter superfamily. Heme (hemin) importer (TC 3.A.1.14.5) family. In terms of assembly, the complex is composed of two ATP-binding proteins (HmuV), two transmembrane proteins (HmuU) and a solute-binding protein (HmuT).

Its subcellular location is the cell inner membrane. In terms of biological role, part of the ABC transporter complex HmuTUV involved in hemin import. Responsible for energy coupling to the transport system. This chain is Hemin import ATP-binding protein HmuV, found in Pseudomonas entomophila (strain L48).